We begin with the raw amino-acid sequence, 435 residues long: IAA-amino acid hydrolase ILR1-like 5 (435 aa).

An N-terminal signal peptide occupies residues 1–25; sequence MSFCKLVSFVLILHLLNSCLISCSS. Mn(2+) is bound by residues Cys134, His136, Glu170, His194, and His397. A Prevents secretion from ER motif is present at residues 432–435; it reads KDEL.

The protein belongs to the peptidase M20 family.

The protein resides in the endoplasmic reticulum lumen. In terms of biological role, hydrolyzes certain amino acid conjugates of the plant growth regulator indole-3-acetic acid (IAA). This chain is IAA-amino acid hydrolase ILR1-like 5, found in Arabidopsis thaliana (Mouse-ear cress).